A 214-amino-acid polypeptide reads, in one-letter code: Pyridoxine/pyridoxamine 5'-phosphate oxidase (214 aa).

Residues Arg-8–Tyr-11 and Lys-66 contribute to the substrate site. FMN-binding positions include Arg-61 to Lys-66, Phe-76 to Thr-77, Arg-82, Lys-83, and Gln-105. Tyr-123, Arg-127, and Ser-131 together coordinate substrate. FMN contacts are provided by residues Gln-140–Ser-141 and Trp-184. Arg-190 to His-192 contacts substrate. Arg-194 contacts FMN.

The protein belongs to the pyridoxamine 5'-phosphate oxidase family. Homodimer. Requires FMN as cofactor.

The catalysed reaction is pyridoxamine 5'-phosphate + O2 + H2O = pyridoxal 5'-phosphate + H2O2 + NH4(+). It carries out the reaction pyridoxine 5'-phosphate + O2 = pyridoxal 5'-phosphate + H2O2. It functions in the pathway cofactor metabolism; pyridoxal 5'-phosphate salvage; pyridoxal 5'-phosphate from pyridoxamine 5'-phosphate: step 1/1. It participates in cofactor metabolism; pyridoxal 5'-phosphate salvage; pyridoxal 5'-phosphate from pyridoxine 5'-phosphate: step 1/1. Its function is as follows. Catalyzes the oxidation of either pyridoxine 5'-phosphate (PNP) or pyridoxamine 5'-phosphate (PMP) into pyridoxal 5'-phosphate (PLP). The polypeptide is Pyridoxine/pyridoxamine 5'-phosphate oxidase (Burkholderia thailandensis (strain ATCC 700388 / DSM 13276 / CCUG 48851 / CIP 106301 / E264)).